A 132-amino-acid polypeptide reads, in one-letter code: Small ribosomal subunit protein uS11 (132 aa).

This sequence belongs to the universal ribosomal protein uS11 family. Part of the 30S ribosomal subunit. Interacts with proteins S7 and S18. Binds to IF-3.

In terms of biological role, located on the platform of the 30S subunit, it bridges several disparate RNA helices of the 16S rRNA. Forms part of the Shine-Dalgarno cleft in the 70S ribosome. In Dichelobacter nodosus (strain VCS1703A), this protein is Small ribosomal subunit protein uS11.